Reading from the N-terminus, the 125-residue chain is MADLAKIVEDLSTLTVLEAAELSKLLEEKWGVSAAAPVAVAAAGGAGAAAAVEEEKTEFDVVLVDAGANKINVIKEVRAITGLGLKEAKDLVEGAPKAVKEAVSKAEAADLKKKLEDAGAKVDVK.

It belongs to the bacterial ribosomal protein bL12 family. Homodimer. Part of the 50S ribosomal subunit; present in 6 copies per ribosome. Forms part of the ribosomal stalk which helps the ribosome interact with GTP-bound translation factors. Forms a heptameric L10(L12)2(L12)2(L12)2 complex, where L10 forms an elongated spine to which 3 L12 dimers bind in a sequential fashion.

Its function is as follows. Forms part of the ribosomal stalk which helps the ribosome interact with GTP-bound translation factors. Is thus essential for accurate translation. In Agrobacterium fabrum (strain C58 / ATCC 33970) (Agrobacterium tumefaciens (strain C58)), this protein is Large ribosomal subunit protein bL12.